Here is a 96-residue protein sequence, read N- to C-terminus: UPF0235 protein YggU (96 aa).

The protein belongs to the UPF0235 family.

This Salmonella agona (strain SL483) protein is UPF0235 protein YggU.